Consider the following 474-residue polypeptide: Cysteine--tRNA ligase (474 aa).

Residue C29 coordinates Zn(2+). The 'HIGH' region motif lies at 31 to 41; sequence ATVQGEPHVGH. The Zn(2+) site is built by C211, H236, and E240. Positions 267 to 271 match the 'KMSKS' region motif; the sequence is KMSKS. ATP is bound at residue K270.

It belongs to the class-I aminoacyl-tRNA synthetase family. In terms of assembly, monomer. Zn(2+) serves as cofactor.

The protein localises to the cytoplasm. The enzyme catalyses tRNA(Cys) + L-cysteine + ATP = L-cysteinyl-tRNA(Cys) + AMP + diphosphate. The chain is Cysteine--tRNA ligase from Beutenbergia cavernae (strain ATCC BAA-8 / DSM 12333 / CCUG 43141 / JCM 11478 / NBRC 16432 / NCIMB 13614 / HKI 0122).